Consider the following 525-residue polypeptide: Light-independent protochlorophyllide reductase subunit B (525 aa).

Asp-36 contacts [4Fe-4S] cluster. The active-site Proton donor is the Asp-290. Residue 425 to 426 coordinates substrate; it reads GL.

This sequence belongs to the ChlB/BchB/BchZ family. Protochlorophyllide reductase is composed of three subunits; ChlL, ChlN and ChlB. Forms a heterotetramer of two ChlB and two ChlN subunits. Requires [4Fe-4S] cluster as cofactor.

The enzyme catalyses chlorophyllide a + oxidized 2[4Fe-4S]-[ferredoxin] + 2 ADP + 2 phosphate = protochlorophyllide a + reduced 2[4Fe-4S]-[ferredoxin] + 2 ATP + 2 H2O. It functions in the pathway porphyrin-containing compound metabolism; chlorophyll biosynthesis (light-independent). Functionally, component of the dark-operative protochlorophyllide reductase (DPOR) that uses Mg-ATP and reduced ferredoxin to reduce ring D of protochlorophyllide (Pchlide) to form chlorophyllide a (Chlide). This reaction is light-independent. The NB-protein (ChlN-ChlB) is the catalytic component of the complex. This is Light-independent protochlorophyllide reductase subunit B from Prochlorococcus marinus (strain MIT 9312).